The following is a 145-amino-acid chain: Ribosome maturation factor RimP (145 aa).

The protein belongs to the RimP family.

It localises to the cytoplasm. In terms of biological role, required for maturation of 30S ribosomal subunits. The polypeptide is Ribosome maturation factor RimP (Borrelia garinii subsp. bavariensis (strain ATCC BAA-2496 / DSM 23469 / PBi) (Borreliella bavariensis)).